The chain runs to 145 residues: Small ribosomal subunit protein uS9 (145 aa).

The protein belongs to the universal ribosomal protein uS9 family.

The protein resides in the cytoplasm. In Fritillaria agrestis (Stinkbells), this protein is Small ribosomal subunit protein uS9 (RPS16).